A 357-amino-acid polypeptide reads, in one-letter code: Aurora kinase A- and ninein-interacting protein (357 aa).

Polar residues predominate over residues 71–91 (LQPGKTNGSDQKSVSSHTESQ). A disordered region spans residues 71 to 98 (LQPGKTNGSDQKSVSSHTESQINKESKK). The tract at residues 187 to 357 (RKEEKGDSAR…EGNQVIRHQF (171 aa)) is interaction with AURKA. Phosphoserine is present on residues Ser-267 and Ser-292. The tract at residues 281 to 357 (KDSWSQLFTE…EGNQVIRHQF (77 aa)) is interaction with RBBP8/CtIP.

Belongs to the AUNIP family. In terms of assembly, interacts (via C-terminus) with AURKA (via C-terminus). Interacts (via N-terminus) with NIN; this interaction blocks NIN phosphorylation by both AURKA and GSK3B. Identified in a complex with NIN and AURKA. Interacts with RBBP8/CtIP. As to expression, expressed in heart, skeletal muscles, placenta and testis.

Its subcellular location is the nucleus. The protein localises to the chromosome. It localises to the cytoplasm. It is found in the cytoskeleton. The protein resides in the microtubule organizing center. Its subcellular location is the centrosome. The protein localises to the spindle pole. Its function is as follows. DNA-binding protein that accumulates at DNA double-strand breaks (DSBs) following DNA damage and promotes DNA resection and homologous recombination. Serves as a sensor of DNA damage: binds DNA with a strong preference for DNA substrates that mimic structures generated at stalled replication forks, and anchors RBBP8/CtIP to DSB sites to promote DNA end resection and ensuing homologous recombination repair. Inhibits non-homologous end joining (NHEJ). Required for the dynamic movement of AURKA at the centrosomes and spindle apparatus during the cell cycle. The sequence is that of Aurora kinase A- and ninein-interacting protein from Homo sapiens (Human).